The chain runs to 258 residues: Snake venom serine protease 5 (258 aa).

Residues 1–18 (MVLIRVLANLLILQLSYA) form the signal peptide. Residues 19–24 (QKSSEL) constitute a propeptide that is removed on maturation. The Peptidase S1 domain occupies 25–249 (VVGGRPCNIN…HLDWIQNIIA (225 aa)). Disulfide bonds link Cys-31–Cys-163, Cys-50–Cys-66, Cys-98–Cys-256, Cys-142–Cys-210, Cys-174–Cys-189, and Cys-200–Cys-225. Asn-44 carries an N-linked (GlcNAc...) asparagine glycan. His-65 (charge relay system) is an active-site residue. The N-linked (GlcNAc...) asparagine glycan is linked to Asn-103. Asp-110 functions as the Charge relay system in the catalytic mechanism. 4 N-linked (GlcNAc...) asparagine glycosylation sites follow: Asn-121, Asn-122, Asn-154, and Asn-170. Ser-204 functions as the Charge relay system in the catalytic mechanism. Asn-251 is a glycosylation site (N-linked (GlcNAc...) asparagine).

Belongs to the peptidase S1 family. Snake venom subfamily. In terms of assembly, monomer. In terms of tissue distribution, expressed by the venom gland.

The protein localises to the secreted. Functionally, snake venom serine protease that may act in the hemostasis system of the prey. The protein is Snake venom serine protease 5 of Trimeresurus stejnegeri (Chinese green tree viper).